The sequence spans 319 residues: Aspartate carbamoyltransferase catalytic subunit (319 aa).

Carbamoyl phosphate contacts are provided by Arg-59 and Thr-60. Lys-87 is an L-aspartate binding site. Arg-109, His-137, and Gln-140 together coordinate carbamoyl phosphate. Residues Arg-170 and Arg-224 each coordinate L-aspartate. 2 residues coordinate carbamoyl phosphate: Gly-265 and Pro-266.

This sequence belongs to the aspartate/ornithine carbamoyltransferase superfamily. ATCase family. Heterododecamer (2C3:3R2) of six catalytic PyrB chains organized as two trimers (C3), and six regulatory PyrI chains organized as three dimers (R2).

The enzyme catalyses carbamoyl phosphate + L-aspartate = N-carbamoyl-L-aspartate + phosphate + H(+). It participates in pyrimidine metabolism; UMP biosynthesis via de novo pathway; (S)-dihydroorotate from bicarbonate: step 2/3. In terms of biological role, catalyzes the condensation of carbamoyl phosphate and aspartate to form carbamoyl aspartate and inorganic phosphate, the committed step in the de novo pyrimidine nucleotide biosynthesis pathway. The polypeptide is Aspartate carbamoyltransferase catalytic subunit (Gemmatimonas aurantiaca (strain DSM 14586 / JCM 11422 / NBRC 100505 / T-27)).